The chain runs to 1394 residues: MNQEVLNVFNPTVPAPAFNQIRITIASPDKIKSWSYGEIKKPETINYRTFKPERDGLFCARIFGPIKDYECLCGKYKRMKYKGIICEKCGVEVTLSRVRRERMGHIELAAPVAHIWFLKSLPSRIGLLLDMTLKDLERILYFEYFVVIEPGTTKLKYRQLLSEDEYLRAQDEFGETNFTAMIGAEAIREILRGMDLDKIAADLRVEIAEATTELKPKKLAKRLKIVEAFQQSGNKPEWMILTHVPVIPPDLRPLVPLDGGRFATSDLNDLYRRVINRNNRLKRLIELRAPDIIIRNEKRMLQEAVDALFDNGRRGRVITGANKRPLKSLADMLKGKQGRFRQNLLGKRVDYSGRSVIVVGPELKLHQCGLPKKMALELFKPFIYSRLDAKGHSATVKQAKKLVEKERPEVWDILDEVIREHPVMLNRAPTLHRLGIQAFEPVLIEGKAIQLHPLVCSAFNADFDGDQMAVHVPLSLEAQLEARVLMMSTNNILHPANGQPIIVPSQDIVLGLYYLSIMKEKEPGEGMMFANMAEIDHALNAKAITLATKIRGRYNGVDAEGKPYSKIYETSPGRMKIGELLPKHPKLSYDVVNKLMTKKEISNMIDAVYRHCGQKESVIFCDRIMALGFYNAFRAGISFGKDDMVVPKKKWDLVEETRALTKEYEQQYNDGLITQGEKYNKVVDAWGKCSDRVAEEMMKEISSVKKDPKTGREKQINSIYMMSHSGARGSPAQMKQLAGMRGLMAKPSGEIIESPIISNFKEGLTVMEYFNSTHGARKGLADTALKTANSGYLTRRLVDVAQDSIITERDCGSEKGIHMRAIIDAGQVVASLASRVLGRTAAEDIVEPATGNVIVPRGTMIEEWHVERINKSGIQEIKIRSVLTCETRNGVCGTCYGRDLARGTPVNMGEAVGVIAAQSIGEPGTQLTMRTFHIGGAATLADSSYVESNFEGIVRIRNRNVARNSEGDLVVMARNLAVVIVDVDGTERAVNRVQYGARLKVDEGDTIKRGQRIAEWDPYTRPILSEVDGIVAFEDLTEGSSMNETVDESTGIAKRVVTDSRSGRGPELRPAILIKGKDGKIIKLPRGGDARYALPVEAIISVDPNQTLKAGDAVARVPMESAKTRDITGGLPRVAELFEARRPKDAAIIAEISGTIRFGRDYKNKRRLSIEPADGGDAVEYLIPKGKHIHLQDGDVVEKGDFIVDGNPAPHDILAIKGVEELAAFLVNEIQEVYRLQGVHINDKHIEVIVRNMLQKVEIDDSGETDFLDGEQVDRIEFIEANEKAAEEAKKPATGHPVLLGITKASLQTRSFFSAASFQETTRVLTEAAVNGKVDPLEGLKENVIVGRLIPAGTGAQMARLRTIANSRDDLIVATRDEQSEGQPLVQGPADAAE.

Residues Cys-71, Cys-73, Cys-86, and Cys-89 each contribute to the Zn(2+) site. Positions 462, 464, and 466 each coordinate Mg(2+). Zn(2+)-binding residues include Cys-811, Cys-885, Cys-892, and Cys-895.

This sequence belongs to the RNA polymerase beta' chain family. In terms of assembly, the RNAP catalytic core consists of 2 alpha, 1 beta, 1 beta' and 1 omega subunit. When a sigma factor is associated with the core the holoenzyme is formed, which can initiate transcription. It depends on Mg(2+) as a cofactor. Requires Zn(2+) as cofactor.

It carries out the reaction RNA(n) + a ribonucleoside 5'-triphosphate = RNA(n+1) + diphosphate. Its function is as follows. DNA-dependent RNA polymerase catalyzes the transcription of DNA into RNA using the four ribonucleoside triphosphates as substrates. In Xanthobacter autotrophicus (strain ATCC BAA-1158 / Py2), this protein is DNA-directed RNA polymerase subunit beta'.